Consider the following 246-residue polypeptide: uncharacterized protein (246 aa).

This is an uncharacterized protein from Thermotoga maritima (strain ATCC 43589 / DSM 3109 / JCM 10099 / NBRC 100826 / MSB8).